Reading from the N-terminus, the 392-residue chain is Bifunctional enzyme Fae/Hps (392 aa).

Residues 1 to 161 form a formaldehyde-activating enzyme region; sequence MFQIGEALMG…EESNKSTHAI (161 aa). The active-site Proton donor is the His17. Residues Asp19, Leu48, Lys66, Thr68, and Gln83 each coordinate substrate. Positions 162-392 are 3-hexulose-6-phosphate synthase; that stretch reads MGFKVTRLWD…IDQFRVMTDF (231 aa).

In the N-terminal section; belongs to the formaldehyde-activating enzyme family. This sequence in the C-terminal section; belongs to the HPS/KGPDC family. HPS subfamily.

It carries out the reaction 5,6,7,8-tetrahydromethanopterin + formaldehyde = 5,10-methylenetetrahydromethanopterin + H2O. The enzyme catalyses D-ribulose 5-phosphate + formaldehyde = D-arabino-hex-3-ulose 6-phosphate. It functions in the pathway carbohydrate biosynthesis; D-ribose 5-phosphate biosynthesis. Its function is as follows. Catalyzes the condensation of formaldehyde with tetrahydromethanopterin (H(4)MPT) to 5,10-methylenetetrahydromethanopterin. Functionally, catalyzes the reversible formation of ribulose-5-phosphate and formaldehyde from 3-hexulose-6-phosphate. In Methanosarcina mazei (strain ATCC BAA-159 / DSM 3647 / Goe1 / Go1 / JCM 11833 / OCM 88) (Methanosarcina frisia), this protein is Bifunctional enzyme Fae/Hps.